The chain runs to 548 residues: Protein NRT1/ PTR FAMILY 2.4 (548 aa).

12 helical membrane-spanning segments follow: residues 29–49, 65–85, 88–108, 136–156, 172–192, 200–220, 316–336, 354–374, 393–413, 429–449, 468–488, and 508–528; these read TLLGMSITYFGWVMNLIVFLI, IVNGVVNMLPVVAAILADSFF, IPVISASAFISLTGISLLTLI, ILYAALALVITGTAGTRFILA, FFNWYFFTLYGGAITGTTAIV, WKLGFGLCVAANLISFIIFVA, LVPLWTSVMFLSAPLAVQMSM, VSAGSMQVIALVSGCVFIILN, LQKVGIGHVLTILSMAISAVV, VLWLVPALVINGIGEAFHFPA, SLTSVVMGISFYLSTALIDVI, and YLVLVIIGVSNFGYFLVCSWF.

It belongs to the major facilitator superfamily. Proton-dependent oligopeptide transporter (POT/PTR) (TC 2.A.17) family. As to expression, strongly expressed in the root stele.

The protein resides in the membrane. Transporter involved in a passive nitrate efflux. This chain is Protein NRT1/ PTR FAMILY 2.4 (NPF2.4), found in Arabidopsis thaliana (Mouse-ear cress).